The following is an 842-amino-acid chain: Protein P (842 aa).

A terminal protein domain (TP) region spans residues 1–177 (MPLSYQHFRK…FCGSPYSWEQ (177 aa)). Positions 178 to 346 (ELQHGRLVFQ…YCLTHIVNLL (169 aa)) are spacer. The disordered stretch occupies residues 218–274 (LKQSRLGLQPQQGSLARGKSGRSGSIRARVPPTTRRSFGVEPSGSGHIDNRASSTSS). The interval 347 to 690 (EDWGPCTEHG…YLHLYPVARR (344 aa)) is polymerase/reverse transcriptase domain (RT). Residues 357–600 (EHNIRIPRTP…YSLNFMGYVI (244 aa)) form the Reverse transcriptase domain. Residues aspartate 429, aspartate 551, and aspartate 552 each contribute to the Mg(2+) site.

It belongs to the hepadnaviridae P protein family.

It catalyses the reaction DNA(n) + a 2'-deoxyribonucleoside 5'-triphosphate = DNA(n+1) + diphosphate. The enzyme catalyses Endonucleolytic cleavage to 5'-phosphomonoester.. Activated by host HSP70 and HSP40 in vitro to be able to bind the epsilon loop of the pgRNA. Because deletion of the RNase H region renders the protein partly chaperone-independent, the chaperones may be needed indirectly to relieve occlusion of the RNA-binding site by this domain. Inhibited by several reverse-transcriptase inhibitors: Lamivudine, Adefovir and Entecavir. Functionally, multifunctional enzyme that converts the viral RNA genome into dsDNA in viral cytoplasmic capsids. This enzyme displays a DNA polymerase activity that can copy either DNA or RNA templates, and a ribonuclease H (RNase H) activity that cleaves the RNA strand of RNA-DNA heteroduplexes in a partially processive 3'- to 5'-endonucleasic mode. Neo-synthesized pregenomic RNA (pgRNA) are encapsidated together with the P protein, and reverse-transcribed inside the nucleocapsid. Initiation of reverse-transcription occurs first by binding the epsilon loop on the pgRNA genome, and is initiated by protein priming, thereby the 5'-end of (-)DNA is covalently linked to P protein. Partial (+)DNA is synthesized from the (-)DNA template and generates the relaxed circular DNA (RC-DNA) genome. After budding and infection, the RC-DNA migrates in the nucleus, and is converted into a plasmid-like covalently closed circular DNA (cccDNA). The activity of P protein does not seem to be necessary for cccDNA generation, and is presumably released from (+)DNA by host nuclear DNA repair machinery. In Hepatitis B virus genotype C subtype adr (isolate Korea/Kim/1989) (HBV-C), this protein is Protein P.